The primary structure comprises 325 residues: Beta-ketoacyl-[acyl-carrier-protein] synthase III (325 aa).

Active-site residues include Cys-112 and His-250. Residues Gln-251–Arg-255 are ACP-binding. Residue Asn-280 is part of the active site.

This sequence belongs to the thiolase-like superfamily. FabH family. As to quaternary structure, homodimer.

Its subcellular location is the cytoplasm. It carries out the reaction malonyl-[ACP] + acetyl-CoA + H(+) = 3-oxobutanoyl-[ACP] + CO2 + CoA. It participates in lipid metabolism; fatty acid biosynthesis. Catalyzes the condensation reaction of fatty acid synthesis by the addition to an acyl acceptor of two carbons from malonyl-ACP. Catalyzes the first condensation reaction which initiates fatty acid synthesis and may therefore play a role in governing the total rate of fatty acid production. Possesses both acetoacetyl-ACP synthase and acetyl transacylase activities. Its substrate specificity determines the biosynthesis of branched-chain and/or straight-chain of fatty acids. This is Beta-ketoacyl-[acyl-carrier-protein] synthase III from Lactococcus lactis subsp. cremoris (strain SK11).